A 126-amino-acid chain; its full sequence is MAVAKEEILETISNMTVMDVVELIEAMEEKFGVSAAAPIAAAAPAAGAEAGAAAEEKTEFDVVLVSFGSNKVQVIKAVRSITSLGLKEAKDLVEGAPSPVKEGISKDEADEIKKQLEEAGASIEVK.

The protein belongs to the bacterial ribosomal protein bL12 family. As to quaternary structure, homodimer. Part of the ribosomal stalk of the 50S ribosomal subunit. Forms a multimeric L10(L12)X complex, where L10 forms an elongated spine to which 2 to 4 L12 dimers bind in a sequential fashion. Binds GTP-bound translation factors.

Its function is as follows. Forms part of the ribosomal stalk which helps the ribosome interact with GTP-bound translation factors. Is thus essential for accurate translation. The sequence is that of Large ribosomal subunit protein bL12 from Nitrosococcus oceani (strain ATCC 19707 / BCRC 17464 / JCM 30415 / NCIMB 11848 / C-107).